The primary structure comprises 227 residues: MNIFNPNHDRKAIVIFSGGQDSTTCLFQAIAEYGKENIEAITFQYGQRHAIELEKARAIVQDLGIKQTLIDTSVMKAITHNALMDEQAHIEQKENELPNTFVDGRNALFLLYAAIYAKGQGIQDIITGVCETDFSGYPDCRDVFIKSMNVTLNLAMDYQFNIKTPLMYLTKAQTWQLADELGVLNYVQKHTHTCYEGIEGGCGKCPSCILRNKGLKKYLTQKGRKNV.

Residue Phe16–Leu26 coordinates ATP. Zn(2+) contacts are provided by Cys194, Cys202, Cys205, and Cys208.

Belongs to the QueC family. Zn(2+) is required as a cofactor.

It carries out the reaction 7-carboxy-7-deazaguanine + NH4(+) + ATP = 7-cyano-7-deazaguanine + ADP + phosphate + H2O + H(+). It functions in the pathway purine metabolism; 7-cyano-7-deazaguanine biosynthesis. Functionally, catalyzes the ATP-dependent conversion of 7-carboxy-7-deazaguanine (CDG) to 7-cyano-7-deazaguanine (preQ(0)). This chain is 7-cyano-7-deazaguanine synthase, found in Haemophilus influenzae (strain PittEE).